Reading from the N-terminus, the 140-residue chain is Methylglyoxal synthase (140 aa).

The MGS-like domain occupies 1–140 (MNIALIAHDE…KERQEKEGTP (140 aa)). Substrate contacts are provided by residues H8, K12, 34 to 37 (TGTT), and 54 to 55 (SG). D60 serves as the catalytic Proton donor/acceptor. H87 contacts substrate.

The protein belongs to the methylglyoxal synthase family.

The catalysed reaction is dihydroxyacetone phosphate = methylglyoxal + phosphate. Functionally, catalyzes the formation of methylglyoxal from dihydroxyacetone phosphate. The sequence is that of Methylglyoxal synthase from Oceanobacillus iheyensis (strain DSM 14371 / CIP 107618 / JCM 11309 / KCTC 3954 / HTE831).